A 700-amino-acid polypeptide reads, in one-letter code: Elongation factor G (700 aa).

The region spanning 8 to 290 (ERYRNIGISA…AVVEFMPSPV (283 aa)) is the tr-type G domain. GTP contacts are provided by residues 17–24 (AHIDAGKT), 88–92 (DTPGH), and 142–145 (NKMD).

Belongs to the TRAFAC class translation factor GTPase superfamily. Classic translation factor GTPase family. EF-G/EF-2 subfamily.

It is found in the cytoplasm. Functionally, catalyzes the GTP-dependent ribosomal translocation step during translation elongation. During this step, the ribosome changes from the pre-translocational (PRE) to the post-translocational (POST) state as the newly formed A-site-bound peptidyl-tRNA and P-site-bound deacylated tRNA move to the P and E sites, respectively. Catalyzes the coordinated movement of the two tRNA molecules, the mRNA and conformational changes in the ribosome. The polypeptide is Elongation factor G (Albidiferax ferrireducens (strain ATCC BAA-621 / DSM 15236 / T118) (Rhodoferax ferrireducens)).